The chain runs to 715 residues: SEC14-like protein 1 (715 aa).

The tract at residues 1 to 510 (MVQKYQSPVR…VPKSLYRTAE (510 aa)) is required for interaction and inhibitory function toward RIGI. Residues 3–175 (QKYQSPVRVY…YLRQLEEEGI (173 aa)) enclose the PRELI/MSF1 domain. At Thr234 the chain carries Phosphothreonine. One can recognise a CRAL-TRIO domain in the interval 319–495 (PPQVLLDYYA…FLSGECMCDV (177 aa)). The GOLD domain maps to 521 to 674 (TETIYQSASV…KCKVMYYTEV (154 aa)). Phosphoserine is present on Ser586.

As to quaternary structure, interacts with RIGI (via tandem CARD domain); the interaction is direct. Interacts (via GOLD domain) with SLC18A3; the interaction is direct. Interacts with SLC5A7 (via GOLD domain); the interaction is direct.

The protein resides in the cytoplasm. Its subcellular location is the golgi apparatus. May play a role in innate immunity by inhibiting the antiviral RIG-I signaling pathway. In this pathway, functions as a negative regulator of RIGI, the cytoplasmic sensor of viral nucleic acids. Prevents the interaction of RIGI with MAVS/IPS1, an important step in signal propagation. May also regulate the SLC18A3 and SLC5A7 cholinergic transporters. In Mus musculus (Mouse), this protein is SEC14-like protein 1.